A 392-amino-acid chain; its full sequence is Proteasome-activating nucleotidase (392 aa).

Residues 19–53 (IVRLLEEKIESLTKELEKLRQDLNWYKGELEKLLA) are a coiled coil. Residues 178 to 183 (GTGKTL) and Y317 each bind ATP. Residues 390 to 392 (KYV) form a docks into pockets in the proteasome alpha-ring to cause gate opening region.

Belongs to the AAA ATPase family. Homohexamer. The hexameric complex has a two-ring architecture resembling a top hat that caps the 20S proteasome core at one or both ends. Upon ATP-binding, the C-terminus of PAN interacts with the alpha-rings of the proteasome core by binding to the intersubunit pockets.

Its subcellular location is the cytoplasm. In terms of biological role, ATPase which is responsible for recognizing, binding, unfolding and translocation of substrate proteins into the archaeal 20S proteasome core particle. Is essential for opening the gate of the 20S proteasome via an interaction with its C-terminus, thereby allowing substrate entry and access to the site of proteolysis. Thus, the C-termini of the proteasomal ATPase function like a 'key in a lock' to induce gate opening and therefore regulate proteolysis. Unfolding activity requires energy from ATP hydrolysis, whereas ATP binding alone promotes ATPase-20S proteasome association which triggers gate opening, and supports translocation of unfolded substrates. The polypeptide is Proteasome-activating nucleotidase (Sulfurisphaera tokodaii (strain DSM 16993 / JCM 10545 / NBRC 100140 / 7) (Sulfolobus tokodaii)).